The following is a 536-amino-acid chain: Prickle planar cell polarity protein 3-B (536 aa).

The PET domain occupies 66 to 175 (SGSQRDSLCD…CVRPISGTMS (110 aa)). LIM zinc-binding domains are found at residues 177 to 241 (TVCQ…ELKR), 242 to 302 (PRCL…LYAQ), and 305 to 366 (DSCG…HTKS). Residues 418 to 536 (PTQAAPARSL…KKKDKSCFLS (119 aa)) form a disordered region. The span at 438–448 (FSRECPNRRSL) shows a compositional bias: basic and acidic residues. Positions 450-467 (DLSSHTRTPTRVTFQLPS) are enriched in polar residues. A compositionally biased stretch (low complexity) spans 474–487 (SISFSRPSFTSSSS).

Belongs to the prickle / espinas / testin family. Interacts with vangl2 via its C-terminus. The vangl2-dependent membrane recruitment of prickle3 is a prerequisite for its polarization. Interacts with wtip. Wtip is involved in the recruitment of prickle3 to the basal body.

The protein resides in the cytoplasm. The protein localises to the cell membrane. It localises to the mitochondrion. In terms of biological role, involved in the planar cell polarity (PCP) pathway that is essential for the polarization of epithelial cells during morphogenetic processes, including gastrulation and neurulation. PCP is maintained by two molecular modules, the global and the core modules. Proteins of the core module include the proteins Frizzled (Fz), Disheveled (Dsh), Van Gogh (Vang), Prickle (Pk), Flamingo (Fmi, Celsr) and Diego (Dgo). The core module proteins develop subcellular asymmetry, accumulating in two groups on opposite sides of epithelial cells. Distinct proximal (Vang, Pk and Fmi) and distal (Fz, Dsh, Dgo and Fmi) complexes segregate to opposite sides of the cell, where they interact with the opposite complex in the neighboring cell at or near the adherents junctions. Directional information to orient polarization with respect to the tissue axes is provided by the global module which involves Wnt proteins. Involved in the organization of the basal body. Involved in cilia growth and positioning. Required for proper assembly, stability, and function of mitochondrial membrane ATP synthase (mitochondrial complex V). In Xenopus laevis (African clawed frog), this protein is Prickle planar cell polarity protein 3-B (prickle3-b).